We begin with the raw amino-acid sequence, 436 residues long: Adenosylmethionine-8-amino-7-oxononanoate aminotransferase (436 aa).

Residue W56 participates in substrate binding. Residue 114-115 (GS) participates in pyridoxal 5'-phosphate binding. Substrate is bound at residue Y148. A pyridoxal 5'-phosphate-binding site is contributed by D245. Substrate contacts are provided by K274, S309, and R400. The residue at position 274 (K274) is an N6-(pyridoxal phosphate)lysine.

Belongs to the class-III pyridoxal-phosphate-dependent aminotransferase family. BioA subfamily. In terms of assembly, homodimer. Pyridoxal 5'-phosphate is required as a cofactor.

Its subcellular location is the cytoplasm. The catalysed reaction is (8S)-8-amino-7-oxononanoate + S-adenosyl-L-methionine = S-adenosyl-4-methylsulfanyl-2-oxobutanoate + (7R,8S)-7,8-diammoniononanoate. The protein operates within cofactor biosynthesis; biotin biosynthesis; 7,8-diaminononanoate from 8-amino-7-oxononanoate (SAM route): step 1/1. Catalyzes the transfer of the alpha-amino group from S-adenosyl-L-methionine (SAM) to 7-keto-8-aminopelargonic acid (KAPA) to form 7,8-diaminopelargonic acid (DAPA). It is the only aminotransferase known to utilize SAM as an amino donor. The sequence is that of Adenosylmethionine-8-amino-7-oxononanoate aminotransferase from Helicobacter pylori (strain ATCC 700392 / 26695) (Campylobacter pylori).